Here is a 279-residue protein sequence, read N- to C-terminus: tRNA dimethylallyltransferase (279 aa).

10–17 (GPTASGKS) contacts ATP. A substrate-binding site is contributed by 12–17 (TASGKS).

The protein belongs to the IPP transferase family. Monomer. Mg(2+) is required as a cofactor.

The enzyme catalyses adenosine(37) in tRNA + dimethylallyl diphosphate = N(6)-dimethylallyladenosine(37) in tRNA + diphosphate. Catalyzes the transfer of a dimethylallyl group onto the adenine at position 37 in tRNAs that read codons beginning with uridine, leading to the formation of N6-(dimethylallyl)adenosine (i(6)A). This is tRNA dimethylallyltransferase from Roseobacter denitrificans (strain ATCC 33942 / OCh 114) (Erythrobacter sp. (strain OCh 114)).